We begin with the raw amino-acid sequence, 366 residues long: 3-isopropylmalate dehydrogenase (366 aa).

78 to 91 contributes to the NAD(+) binding site; sequence GPKWEDLPSHLQPE. 4 residues coordinate substrate: arginine 99, arginine 109, arginine 138, and aspartate 227. Residues aspartate 227, aspartate 251, and aspartate 255 each coordinate Mg(2+). 285 to 297 provides a ligand contact to NAD(+); the sequence is GSAPDIKGKNIAN.

The protein belongs to the isocitrate and isopropylmalate dehydrogenases family. LeuB type 1 subfamily. Homodimer. It depends on Mg(2+) as a cofactor. The cofactor is Mn(2+).

The protein resides in the cytoplasm. The enzyme catalyses (2R,3S)-3-isopropylmalate + NAD(+) = 4-methyl-2-oxopentanoate + CO2 + NADH. Its pathway is amino-acid biosynthesis; L-leucine biosynthesis; L-leucine from 3-methyl-2-oxobutanoate: step 3/4. In terms of biological role, catalyzes the oxidation of 3-carboxy-2-hydroxy-4-methylpentanoate (3-isopropylmalate) to 3-carboxy-4-methyl-2-oxopentanoate. The product decarboxylates to 4-methyl-2 oxopentanoate. This Buchnera aphidicola subsp. Baizongia pistaciae (strain Bp) protein is 3-isopropylmalate dehydrogenase.